A 481-amino-acid chain; its full sequence is Proline--tRNA ligase (481 aa).

This sequence belongs to the class-II aminoacyl-tRNA synthetase family. ProS type 3 subfamily. Homodimer.

It is found in the cytoplasm. The enzyme catalyses tRNA(Pro) + L-proline + ATP = L-prolyl-tRNA(Pro) + AMP + diphosphate. Functionally, catalyzes the attachment of proline to tRNA(Pro) in a two-step reaction: proline is first activated by ATP to form Pro-AMP and then transferred to the acceptor end of tRNA(Pro). The protein is Proline--tRNA ligase of Chlorobium phaeovibrioides (strain DSM 265 / 1930) (Prosthecochloris vibrioformis (strain DSM 265)).